The chain runs to 728 residues: Polyribonucleotide nucleotidyltransferase (728 aa).

Residues Asp509 and Asp515 each contribute to the Mg(2+) site. The KH domain maps to 576-638 (TKIYTFYIPK…TKLKIAILKI (63 aa)). An S1 motif domain is found at 648–715 (GTIYKAKVKN…KFRKIKLSHK (68 aa)).

This sequence belongs to the polyribonucleotide nucleotidyltransferase family. Mg(2+) is required as a cofactor.

The protein resides in the cytoplasm. The enzyme catalyses RNA(n+1) + phosphate = RNA(n) + a ribonucleoside 5'-diphosphate. Involved in mRNA degradation. Catalyzes the phosphorolysis of single-stranded polyribonucleotides processively in the 3'- to 5'-direction. This is Polyribonucleotide nucleotidyltransferase from Karelsulcia muelleri (strain GWSS) (Sulcia muelleri).